A 202-amino-acid chain; its full sequence is Holliday junction branch migration complex subunit RuvA (202 aa).

The segment at 1–64 (MIGRLRGTLA…EDAQLLYGFA (64 aa)) is domain I. Residues 65–143 (SKRERDFFRE…AWEAVPSMFA (79 aa)) form a domain II region. Residues 144–154 (LVPNQPDAPAP) form a flexible linker region. Residues 154–202 (PVASAESDAVSALISLGYKPQEASKAVSAIKDKGLSSEDMIRRALKGMI) are domain III.

It belongs to the RuvA family. Homotetramer. Forms an RuvA(8)-RuvB(12)-Holliday junction (HJ) complex. HJ DNA is sandwiched between 2 RuvA tetramers; dsDNA enters through RuvA and exits via RuvB. An RuvB hexamer assembles on each DNA strand where it exits the tetramer. Each RuvB hexamer is contacted by two RuvA subunits (via domain III) on 2 adjacent RuvB subunits; this complex drives branch migration. In the full resolvosome a probable DNA-RuvA(4)-RuvB(12)-RuvC(2) complex forms which resolves the HJ.

It localises to the cytoplasm. The RuvA-RuvB-RuvC complex processes Holliday junction (HJ) DNA during genetic recombination and DNA repair, while the RuvA-RuvB complex plays an important role in the rescue of blocked DNA replication forks via replication fork reversal (RFR). RuvA specifically binds to HJ cruciform DNA, conferring on it an open structure. The RuvB hexamer acts as an ATP-dependent pump, pulling dsDNA into and through the RuvAB complex. HJ branch migration allows RuvC to scan DNA until it finds its consensus sequence, where it cleaves and resolves the cruciform DNA. This Pseudomonas fluorescens (strain ATCC BAA-477 / NRRL B-23932 / Pf-5) protein is Holliday junction branch migration complex subunit RuvA.